We begin with the raw amino-acid sequence, 736 residues long: Catalase-peroxidase (736 aa).

A disordered region spans residues 1–25 (MSENGKCPVTGKTSKPVAGGGTSNQ). Positions 96–224 (WHSAGTYRMG…LAAVQMGLIY (129 aa)) form a cross-link, tryptophyl-tyrosyl-methioninium (Trp-Tyr) (with M-250). Catalysis depends on H97, which acts as the Proton acceptor. The tryptophyl-tyrosyl-methioninium (Tyr-Met) (with W-96) cross-link spans 224 to 250 (YVNPEGPDGNPDPIASGKDVRETFARM). Residue H265 participates in heme b binding. Positions 294–313 (GWKSSHGRGKGGDTISSGIE) are disordered.

This sequence belongs to the peroxidase family. Peroxidase/catalase subfamily. Homodimer or homotetramer. It depends on heme b as a cofactor. Formation of the three residue Trp-Tyr-Met cross-link is important for the catalase, but not the peroxidase activity of the enzyme.

It catalyses the reaction H2O2 + AH2 = A + 2 H2O. The catalysed reaction is 2 H2O2 = O2 + 2 H2O. Its function is as follows. Bifunctional enzyme with both catalase and broad-spectrum peroxidase activity. The chain is Catalase-peroxidase from Desulfatibacillum aliphaticivorans.